Reading from the N-terminus, the 499-residue chain is Glutamyl-tRNA(Gln) amidotransferase subunit A (499 aa).

Residues Lys-76 and Ser-151 each act as charge relay system in the active site. Ser-175 acts as the Acyl-ester intermediate in catalysis.

Belongs to the amidase family. GatA subfamily. As to quaternary structure, heterotrimer of A, B and C subunits.

It carries out the reaction L-glutamyl-tRNA(Gln) + L-glutamine + ATP + H2O = L-glutaminyl-tRNA(Gln) + L-glutamate + ADP + phosphate + H(+). Its function is as follows. Allows the formation of correctly charged Gln-tRNA(Gln) through the transamidation of misacylated Glu-tRNA(Gln) in organisms which lack glutaminyl-tRNA synthetase. The reaction takes place in the presence of glutamine and ATP through an activated gamma-phospho-Glu-tRNA(Gln). The sequence is that of Glutamyl-tRNA(Gln) amidotransferase subunit A from Rhodopirellula baltica (strain DSM 10527 / NCIMB 13988 / SH1).